The chain runs to 499 residues: Probable cytosol aminopeptidase (499 aa).

Mn(2+) contacts are provided by lysine 263 and aspartate 268. Lysine 275 is an active-site residue. Residues aspartate 286, aspartate 345, and glutamate 347 each contribute to the Mn(2+) site. The active site involves arginine 349.

This sequence belongs to the peptidase M17 family. The cofactor is Mn(2+).

It is found in the cytoplasm. It catalyses the reaction Release of an N-terminal amino acid, Xaa-|-Yaa-, in which Xaa is preferably Leu, but may be other amino acids including Pro although not Arg or Lys, and Yaa may be Pro. Amino acid amides and methyl esters are also readily hydrolyzed, but rates on arylamides are exceedingly low.. The enzyme catalyses Release of an N-terminal amino acid, preferentially leucine, but not glutamic or aspartic acids.. Presumably involved in the processing and regular turnover of intracellular proteins. Catalyzes the removal of unsubstituted N-terminal amino acids from various peptides. The polypeptide is Probable cytosol aminopeptidase (Chlamydia trachomatis serovar L2 (strain ATCC VR-902B / DSM 19102 / 434/Bu)).